We begin with the raw amino-acid sequence, 197 residues long: UPF0056 inner membrane protein YhgN (197 aa).

Residues 1 to 3 lie on the Periplasmic side of the membrane; the sequence is MNE. Residues 4–24 form a helical membrane-spanning segment; it reads IISAAVLLILIMDPLGNLPIF. Topologically, residues 25 to 44 are cytoplasmic; the sequence is MSVLKHTEPKRRRAIMVREL. Residues 45–65 form a helical membrane-spanning segment; sequence LIALLVMLVFLFAGEKILAFL. Topologically, residues 66–71 are periplasmic; the sequence is SLRAET. Residues 72–92 traverse the membrane as a helical segment; the sequence is VSISGGIILFLIAIKMIFPSA. Topologically, residues 93–105 are cytoplasmic; it reads SGNSSGLPAGEEP. Residues 106 to 126 form a helical membrane-spanning segment; that stretch reads FIVPLAIPLVAGPTILATLML. Residues 127-138 lie on the Periplasmic side of the membrane; it reads LSHQYPNQMGHL. A helical membrane pass occupies residues 139–159; that stretch reads VIALLLAWGGTFVILLQSSLF. Topologically, residues 160–173 are cytoplasmic; sequence LRLLGEKGVNALER. The helical transmembrane segment at 174-194 threads the bilayer; that stretch reads LMGLILVMMATQMFLDGIRMW. Residues 195–197 are Periplasmic-facing; sequence MKG.

The protein belongs to the UPF0056 (MarC) family.

Its subcellular location is the cell inner membrane. This chain is UPF0056 inner membrane protein YhgN (yhgN), found in Escherichia coli O157:H7.